The following is a 222-amino-acid chain: Kinetochore protein Spc25 (222 aa).

Residues 51 to 86 (RHQRKVGKLQKVLMERREELDKRVSFIEELDRELEA) are a coiled coil.

This sequence belongs to the SPC25 family. As to quaternary structure, component of the Ndc80 complex, which is composed of Ndc80, Nuf2 and Spc25.

The protein localises to the nucleus. Its subcellular location is the chromosome. The protein resides in the centromere. It is found in the kinetochore. Functionally, acts as a component of the essential kinetochore-associated Ndc80 complex, which is required for chromosome segregation and spindle checkpoint activity during meiosis and mitosis. Required for kinetochore integrity and the organization of stable microtubule binding sites in the outer plate of the kinetochore. Participates in SAC signaling that responds specifically to disruptions in spindle microtubule dynamics. The NDC80 complex synergistically enhances the affinity of the SKA1 complex for microtubules and may allow the NDC80 complex to track depolymerizing microtubules. The chain is Kinetochore protein Spc25 from Drosophila simulans (Fruit fly).